The chain runs to 45 residues: Mu-conotoxin-like Cal 12.1.2d (45 aa).

4 cysteine pairs are disulfide-bonded: C3–C16, C11–C28, C18–C33, and C27–C39. At W17 the chain carries 6'-bromotryptophan. P23 bears the 4-hydroxyproline mark. A 6'-bromotryptophan mark is found at W37 and W38. A 4-hydroxyproline modification is found at P40.

As to expression, expressed by the venom duct.

The protein localises to the secreted. Its function is as follows. Mu-conotoxins block voltage-gated sodium channels. This toxin reversibly blocks voltage-gated sodium channel in cephalopods, with no alteration in the voltage dependence of sodium conductance or on the kinetics of inactivation. This is Mu-conotoxin-like Cal 12.1.2d from Californiconus californicus (California cone).